We begin with the raw amino-acid sequence, 975 residues long: 5'-3' exoribonuclease 2 homolog (975 aa).

The CCHC-type zinc-finger motif lies at 262–279 (RACDLCGQYGHELKECRG). Disordered stretches follow at residues 424-443 (MQMY…GRGQ) and 505-532 (SPAD…EGPK). Residues 534-787 (DIRLYESGWK…GICVLYEDPE (254 aa)) form an interaction with paxt-1 region. The span at 804–821 (EPEKTLKPDDWNDRRDGR) shows a compositional bias: basic and acidic residues. Residues 804-975 (EPEKTLKPDD…GGYHGNSSWR (172 aa)) are disordered. 3 stretches are compositionally biased toward gly residues: residues 850-860 (RGGGGGGGGYR), 886-895 (NYGGRDGGGP), and 908-932 (GYQG…GGGS).

The protein belongs to the 5'-3' exonuclease family. XRN2/RAT1 subfamily. Interacts with paxt-1 (via N-terminus); the interaction is direct and results in stabilization of xrn-2 in the complex. As to expression, expressed in the pharyngeal myoepithelium and intestine. Also expressed in several anterior neurons including the sensory neurons, as well as the interneuron PVT and the pharyngeal motorneuron M5.

The protein localises to the nucleus. Functionally, possesses 5'-&gt;3' exoribonuclease activity. Plays a role in maintenance of steady-state concentration and turnover of microRNAs (miRNA) by degradation of mature miRNA. Degradation role is enhanced when in complex with paxt-1. Partially redundant to xrn-1 in miRNA guide strand degradation. Implicated in differential regulation of mRNAs such as let-7 by controlling the accumulation of mature miRNA. Positively regulates molting of the pharyngeal cuticle. The sequence is that of 5'-3' exoribonuclease 2 homolog from Caenorhabditis elegans.